The following is a 156-amino-acid chain: ATP synthase subunit b (156 aa).

Residues 7 to 29 (LLGQAISFGMFVWFCMKYVWPPI) traverse the membrane as a helical segment.

The protein belongs to the ATPase B chain family. As to quaternary structure, F-type ATPases have 2 components, F(1) - the catalytic core - and F(0) - the membrane proton channel. F(1) has five subunits: alpha(3), beta(3), gamma(1), delta(1), epsilon(1). F(0) has three main subunits: a(1), b(2) and c(10-14). The alpha and beta chains form an alternating ring which encloses part of the gamma chain. F(1) is attached to F(0) by a central stalk formed by the gamma and epsilon chains, while a peripheral stalk is formed by the delta and b chains.

It localises to the cell inner membrane. Functionally, f(1)F(0) ATP synthase produces ATP from ADP in the presence of a proton or sodium gradient. F-type ATPases consist of two structural domains, F(1) containing the extramembraneous catalytic core and F(0) containing the membrane proton channel, linked together by a central stalk and a peripheral stalk. During catalysis, ATP synthesis in the catalytic domain of F(1) is coupled via a rotary mechanism of the central stalk subunits to proton translocation. Component of the F(0) channel, it forms part of the peripheral stalk, linking F(1) to F(0). This is ATP synthase subunit b from Vibrio cholerae serotype O1 (strain ATCC 39541 / Classical Ogawa 395 / O395).